A 401-amino-acid chain; its full sequence is Imidazolonepropionase (401 aa).

His-70 and His-72 together coordinate Fe(3+). His-70 and His-72 together coordinate Zn(2+). 4-imidazolone-5-propanoate is bound by residues Arg-79, Tyr-142, and His-175. Tyr-142 contacts N-formimidoyl-L-glutamate. Fe(3+) is bound at residue His-238. Zn(2+) is bound at residue His-238. 4-imidazolone-5-propanoate is bound at residue Gln-241. Asp-313 provides a ligand contact to Fe(3+). Asp-313 serves as a coordination point for Zn(2+). The N-formimidoyl-L-glutamate site is built by Asn-315 and Gly-317. Thr-318 lines the 4-imidazolone-5-propanoate pocket.

This sequence belongs to the metallo-dependent hydrolases superfamily. HutI family. Requires Zn(2+) as cofactor. Fe(3+) is required as a cofactor.

The protein localises to the cytoplasm. It carries out the reaction 4-imidazolone-5-propanoate + H2O = N-formimidoyl-L-glutamate. The protein operates within amino-acid degradation; L-histidine degradation into L-glutamate; N-formimidoyl-L-glutamate from L-histidine: step 3/3. Catalyzes the hydrolytic cleavage of the carbon-nitrogen bond in imidazolone-5-propanoate to yield N-formimidoyl-L-glutamate. It is the third step in the universal histidine degradation pathway. This is Imidazolonepropionase from Xanthomonas euvesicatoria pv. vesicatoria (strain 85-10) (Xanthomonas campestris pv. vesicatoria).